The sequence spans 6885 residues: MASSPELPTEDEQGSWGIDDLHISLQAEQEDTQKKAFTCWINSQLARHTSPSVISDLFTDIKKGHVLLDLLEVLSGQQLPRDKGSNTFQCRINIEHALTFLRNRSIKLINIHVTDIIDGNPSIILGLIWTIILHFHIEKLAQTLSCNYNQPSLDDVSVVDSSPASSPPAKKCSKVQARWQMSARKALLLWAQEQCATYESVNVTDFKSSWRNGMAFLAIIHALRPDLIDMKSVKHRSNKDNLREAFRIAEQELKIPRLLEPEDVDVVDPDEKSIMTYVAQFLQYSKDAPGTGEEAQGKVKDAMGWLTLQKEKLQKLLKDSENDTYFKKYNSLLSFMESFNEEKKSFLDVLSIKRDLDELDKDHLQLREAWDGLDHQINAWKIKLNYALPPPLHQTEAWLQEVEELMDEDLSASQDHSQAVTLIQEKMTLFKSLMDRFEHHSNILLTFENKDENHLPLVPPNKLEEMKRRINNILEKKFILLLEFHYYKCLVLGLVDEVKSKLDIWNIKYGSRESVELLLEDWHKFIEEKEFLARLDTSFQKCGEIYKNLAGECQNINKQYMMVKSDVCMYRKNIYNVKSTLQKVLACWATYVENLRLLRACFEETKKEEIKEVPFETLAQWNLEHATLNEAGNFLVEVSNDVVGSSISKELRRLNKRWRKLVSKTQLEMNLPLMIKKQDQPTFDNSGNILSKEEKATVEFSTDMSVELPENYNQNIKAGEKHEKENEEFTGQLKVAKDVEKLIGQVEIWEAEAKSVLDQDDVDTSMEESLKHLIAKGSMFDELMARSEDMLQMDIQNISSQESFQHVLTTGLQAKIQEAKEKVQINVVKLIAALKNLTDVSPDLDIRLKMEESQKELESYMMRAQQLLGQRESPGELISKHKEALIISNTKSLAKYLKAVEELKNNVTEDIKMSLEEKSRDVCAKWESLHHELSLYVQQLKIDIEKGKLSDNILKLEKQINKEKKLIRRGRTKGLIKEHEACFSEEGCLYQLNHHMEVLRELCEELPSQKSQQEVKRLLKDYEQKIERLLKCASEIHMTLQPTAGGTSKNEGTITTSENRGGDPHSEAPFAKSDNQPSTEKAMEPTMKFSLASVLRPLQEESIMEKDYSASINSLLERYDTYRDILEHHLQNNKFRITSDFSSEEDRSSSCLQAKLTDLQVIKNETDARWKEFEIISLKLENHVNDIKKPFVIKERDTLKERERELQMTLNTRMESLETALRLVLPVEKASLLLCGSDLPLHKMAIQGFHLIDADRIYQHLRNIQDSIAKQIEICNRLEEPGNFVLKELHPFDLHAMQNIILKYKTQFEGMNHRVQRSEDTLKALEDFLASLRTAKLSAEPVTDLSASDTQVAQENTLTVKNKEGEIHLMKDKAKHLDKCLKMLDMSFKDAERGDDTSCENLLDAFSIKLSETHGYGVQEEFTEENKLLEACIFKNNELLKNIQDVQSQISKIGLKDPTVPAVKHRKKSLIRLDKVLDEYEEEKRHLQEMANSLPHFKDGREKTVNQQCQNTVVLWENTKALVTECLEQCGRVLELLKQYQNFKSILTTLIQKEESVISLQASYMGKENLKKRIAEIEIVKEEFNEHLEVVDKINQVCKNLQFYLNKMKTFEEPPFEKEANIIVDRWLDINEKTEDYYENLGRALALWDKLFNLKNVIDEWTEKALQKMELHQLTEEDRERLKEELQVHEQKTSEFSRRVAEIQFLLQSSEIPLELQVMESSILNKMEHVQKCLTGESNCHALSGSTAELREDLDQAKTQIGMTESLLKALSPSDSLEIFTKLEEIQQQILQQKHSMILLENQIGCLTPELSELKKQYESVSDLFNTKKSVLQDHFSKLLNDQCKNFNDWFSNIKVNLKECFESSETKKSVEQKLQKLSDFLTLEGRNSKIKQVDSVLKHVKKHLPKAHVKELISWLVGQEFELEKMESICQARAKELEDSLQQLLRLQDDHRNLRKWLTNQEEKWKGMEEPGEKTELFCQALARKREQFESVAQLNNSLKEYGFTEEEEIIMEATCLMDRYQTLLRQLSEIEEEDKLLPTEDQSFNDLAHDVIHWIKEIKESLMVLNSSEGKMPLEERIQKIKEIILLKPEGDARIETIMKQAESSEAPLVQKTLTDISNQWDNTLHLASTYLSHQEKLLLEGEKYLQSKEDLRLMLIELKKKQEAGFALQHGLQEKKAQLKIYKKFLKKAQDLTSLLKELKSQGNYLLECTKNPSFSEEPWLEIKHLHESLLQQLQDSVQNLDGHVREHDSYQVCVTDLNTTLDNFSKEFVSFSDKPVDQIAVEEKLQKLQELENRLSLQDGTLKKILALAKSVKQNTSSVGQKIIKDDIKSLQCKQKDLENRLASAKQEMECCLNSILKSKRSTEKKGKFTLPGREKQATSDVQESTQESAAVEKLEEDWEINKDSAVEMAMSKQLSLNAQESMKNTEDERKVNELQNQPLELDTMLRNEQLEEIEKLYTQLEAKKAAIKPLEQTECLNKTETGALVLHNIGYSAQHLDNLLQALITLKKNKESQYCVLRDFQEYLAAVESSMKALLTDKESLKVGPLDSVTYLDKIKKFIASIEKEKDSLGNLKIKWENLSNHVTDMDKKLLESQIKQLEHGWEQVEQQIQKKYSQQVVEYDEFTTLMNKVQDTEISLQQQQQHLQLRLKSPEERAGNQSMIALTTDLQATKHGFSVLKGQAELQMKRIWGEKEKKNLEDGINNLKKQWETLEPLHLEAENQIKKCDIRNKMKETILWAKNLLGELNPSIPLLPDDILSQIRKCKVTHDGILARQQSVESLAEEVKDKVPSLTTYEGSDLNNTLEDLRNQYQMLVLKSTQRSQQLEFKLEERSNFFAIIRKFQLMVQESETLIIPRVETAATEAELKHHHVTLEASQKELQEIDSGISTHLQELTNIYEELNVFERLFLEDQLKNLKIRTNRIQRFIQNTCNEVEHKIKFCRQFHEKTSALQEEADSIQRNELLLNQEVNKGVKEEIYNLKDRLTAIKCCILQVLKLKKVFDYIGLNWDFSQLDQLQTQVFEKEKELEEKIKQLDTFEEEHGKYQALLSKMRAIDLQIKKMTEVVLKAPDSSPESRRLNAQILSQRIEKAKCLCDEIIKKLNENKTFDDSFKEKEILQIKLNAEENDKLYKVLQNMVLELSPKELDEKNCQDKLETSLHVLNQIKSQLQQPLLINLEIKHIQNEKDNCEAFQEQVWAEMCSIKAVTAIEKQREENSSEASDVETKLREFEDLQMQLNTSIDLRTNVLNDAYENLTRYKEAVTRAVESITSLEAIIIPYRVDVGNPEESLEMPLRKQEELESTVAHIQDLTEKLGMISSPEAKLQLQYTLQELVSKNSAMKEAFKAQETEAERYLENYKCYRKMEEDIYTNLSKMETVLGQSMSSLPLSYREALERLEQSKALVSNLISTKEELMKLRQILRLLRLRCTENDGICLLKIVSALWEKWLSLLEAAKEWEMWCEELKQEWKFVSEEIEREAIILDNLQEELPEISKTKEAATTEELSELLDCLCQYGENVEKQQLLLTLLLQRIRSIQNVPESSGAVETVPAFQEITSMKERCNKLLQKVQKNKELVQTEIQERHSFTKEIIALKNFFQQTTTSFQNMAFQDHPEKSEQFEELQSILKKGKLTFENIMEKLRIKYSEMYTIVPAEIESQVEECRKALEDIDEKISNEVLKSSPSYAMRRKIEEINNGLHNVEKMLQQKSKNIEKAQEIQKKMWDELDLWHSKLNELDSEVQDIVEQDPGQAQEWMDNLMIPFQQYQQVSQRAECRTSQLNKATVKMEEYSDLLKSTEAWIENTSHLLANPADYDSLRTLSHHASTVQMALEDSEQKHNLLHSIFMDLEDLSIIFETDELTQSIQELSNQVTALQQKIMESLPQIQRMADDVVAIESEVKSMEKRVSKIKTILLSKEIFDFSPEEHLKHGEVILENIRPMKKTIAEIVSYQVELRLPQTGMKPLPVFQRTNQLLQDIKLLENVTQEQNELLKVVIKQTNEWDEEIENLKQILNNYSAQFSLEHMSPDQADKLPQLQGEIERMEKQILSLNQRKEDLLVDLKATVLNLHQHLKQEQEGVERDRLPAVTSEEGGVAERDASERKLNRRGSMSYLAAVEEEVEESSVKSDNGDEKAEPSPQSWSSLWKHDKDMEEDRASSSSGTIVQEAYGKISTSDNSMAQILTPDSLNTEQGPECSLRPNQTEEGTTPPIEADTLDSSDAQGGLEPRVEKTRPEPTEVLHACKTQVAELELWLQQANVAVEPETLNADMQQVLEQQLVGCQAMLTEIEHKVAFLLETCKDQGLGDNGATQHEAEALSLKLKTVKCNLEKVQMMLQEKHSEDQHPTILKKSSEPEHQEALQPVNLSELESIVTERPQFSRQKDFQQQQVLELKPMEQKDFIKFIEFNAKKMWPQYCQHDNDTTQESSASNQASSPENDVPDSILSPQGQNGDKWQYLHHELSSKIKLPLPQLVEPQVSTNMGILPSVTMYNFRYPTTEELKTYTTQLEDLRQEASNLQTQENMTEEAYINLDKKLFELFLTLSQCLSSVEEMLEMPRLYREDGSGQQVHYETLALELKKLYLALSDKKGDLLKAMTWPGENTNLLLECFDNLQVCLEHTQAAAVCRSKSLKAGLDYNRSYQNEIKRLYHQLIKSKTSLQQSLNEISGQSVAEQLQKADAYTVELENAESRVAKLRDEGERLHLPYALLQEVYKLEDVLDSMWGMLRARYTELSSPFVTESQQDALLQGMVELVKIGKEKLAHGHLKQTKSKVALQAQIENHKVFFQKLVADMLLIQAYSAKILPSLLQNRETFWAEQVTEVKILEEKSRQCGMKLQSLLQKWEEFDENYASLEKDLEILISTLPSVSLVEETEERLVERISFYQQIKRNIGGKHARLYQTLNEGKQLVASVSCPELEGQIAKLEEQWLSLNKKIDHELHRLQALLKHLLSYNRDSDQLTKWLESSQHTLNYWKEQSLNVSQDLDTIRSNINNFFEFSKEVDEKSSLKTAVISIGNQLLHLKETDTATLRASLAQFEQKWTMLITQLPDIQEKLHQLQMEKLPSRKAITEMISWMNNVEHQTSDEDSVHSPSSASQVKHLLQKHKEFRMEMDYKQWIVDFVNQSLLQLSTCDVESKRYERTEFAEHLGEMNRQWHRVHGMLNRKIQHLEQLLESITESENKIQILNNWLEAQEERLKTLQKPESVISVQKLLLDCQDIENQLAIKSKALDELKQSYLTLESGAVPLLEDTASRIDELFQKRSSVLTQVNQLKTSMQSVLQEWKIYDQLYDEVNMMTIRFWYCMEHSKPVVLSLETLRCQVENLQSLQDEAESSEGSWEKLQEVIGKLKGLCPSVAEIIEEKCQNTHKRWTQVNQAIADQLQKAQSLLQLWKAYSNAHGEAAARLKQQEAKFQQLANISMSGNNLAEILPPALQDIKELQHDVQKTKEAFLQNSSVLDRLPQPAESSTHMLLPGPLHSLQRAAYLEKMLLVKANEFEFVLSQFKDFGVRLESLKGLIMHEEENLDRLHQQEKENPDSFLNHVLALTAQSPDIEHLNEVSLKLPLSDVAVKTLQNMNRQWIRATATALERCSELQGIGLNEKFLYCCEKWIQLLEKIEEALKVDVANSLPELLEQQKTYKMLEAEVSINQTIADSYVTQSLQLLDTTEIENRPEFITEFSKLTDRWQNAVQGVRQRKGDVDGLVRQWQDFTTSVENLFRFLTDTSHLLSAVKGQERFSLYQTRSLIHELKNKEIHFQRRRTTCALTLEAGEKLLLTTDLKTKESVGRRISQLQDSWKDMEPQLAEMIKQFQSTVETWDQCEKKIKELKSRLQVLKAQSEDPLPELHEDLHNEKELIKELEQSLASWTQNLKELQTMKADLTRHVLVEDVMVLKEQIEHLHRQWEDLCLRVAIRKQEIEDRLNTWVVFNEKNKELCAWLVQMENKVLQTADISIEEMIEKLQKDCMEEINLFSENKLQLKQMGDQLIKASNKSRAAEIDDKLNKINDRWQHLFDVIGSRVKKLKETFAFIQQLDKNMSNLRTWLARIESELSKPVVYDVCDDQEIQKRLAEQQDLQRDIEQHSAGVESVFNICDVLLHDSDACANETECDSIQQTTRSLDRRWRNICAMSMERRMKIEETWRLWQKFLDDYSRFEDWLKSAERTAACPNSSEVLYTSAKEELKRFEAFQRQIHERLTQLELINKQYRRLARENRTDTASRLKQMVHEGNQRWDNLQRRVTAVLRRLRHFTNQREEFEGTRESILVWLTEMDLQLTNVEHFSESDADDKMRQLNGFQQEITLNTNKIDQLIVFGEQLIQKSEPLDAVLIEDELEELHRYCQEVFGRVSRFHRRLTSCTPGLEDEKEASENETDMEDPREIQTDSWRKRGESEEPSSPQSLCHLVAPGHERSGCETPVSVDSIPLEWDHTGDVGGSSSHEEDEEGPYYSALSGKSISDGHSWHVPDSPSCPEHHYKQMEGDRNVPPVPPASSTPYKPPYGKLLLPPGTDGGKEGPRVLNGNPQQEDGGLAGITEQQSGAFDRWEMIQAQELHNKLKIKQNLQQLNSDISAITTWLKKTEAELEMLKMAKPPSDIQEIELRVKRLQEILKAFDTYKALVVSVNVSSKEFLQTESPESTELQSRLRQLSLLWEAAQGAVDSWRGGLRQSLMQCQDFHQLSQNLLLWLASAKNRRQKAHVTDPKADPRALLECRRELMQLEKELVERQPQVDMLQEISNSLLIKGHGEDCIEAEEKVHVIEKKLKQLREQVSQDLMALQGTQNPASPLPSFDEVDSGDQPPATSVPAPRAKQFRAVRTTEGEEETESRVPGSTRPQRSFLSRVVRAALPLQLLLLLLLLLACLLPSSEEDYSCTQANNFARSFYPMLRYTNGPPPT.

Residues 1-286 (MASSPELPTE…YVAQFLQYSK (286 aa)) form an actin-binding region. Topologically, residues 1–6834 (MASSPELPTE…QRSFLSRVVR (6834 aa)) are cytoplasmic. Calponin-homology (CH) domains are found at residues 31 to 136 (DTQK…LHFH) and 181 to 286 (MSAR…QYSK). Spectrin repeat units follow at residues 297 to 378 (GKVK…HQIN), 379 to 472 (AWKI…RINN), 473 to 575 (ILEK…KNIY), 576 to 680 (NVKS…KQDQ), 735 to 838 (VAKD…KNLT), 839 to 932 (DVSP…LHHE), and 933 to 1034 (LSLY…KCAS). Positions 297 to 6782 (GKVKDAMGWL…PASPLPSFDE (6486 aa)) form a coiled coil. A Phosphoserine modification is found at Ser-841. Lys-955 carries the N6-acetyllysine modification. Over residues 1042–1059 (PTAGGTSKNEGTITTSEN) the composition is skewed to polar residues. The segment at 1042-1084 (PTAGGTSKNEGTITTSENRGGDPHSEAPFAKSDNQPSTEKAME) is disordered. Spectrin repeat units lie at residues 1121 to 1212 (TYRD…TLNT), 1263 to 1323 (NIQD…DTLK), 1324 to 1419 (ALED…YGVQ), 1420 to 1524 (EEFT…ALVT), 1525 to 1636 (ECLE…KTED), 1637 to 1738 (YYEN…TGES), 1739 to 1830 (NCHA…TKKS), 1831 to 1938 (VLQD…AKEL), 1939 to 2036 (EDSL…EEED), 2037 to 2132 (KLLP…LAST), 2133 to 2243 (YLSH…SVQN), and 2244 to 2360 (LDGH…LNSI). Basic and acidic residues predominate over residues 2368-2382 (EKKGKFTLPGREKQA). Residues 2368–2394 (EKKGKFTLPGREKQATSDVQESTQESA) are disordered. Polar residues predominate over residues 2383–2393 (TSDVQESTQES). 16 Spectrin repeats span residues 2432 to 2513 (DERK…TLKK), 2514 to 2620 (NKES…KYSQ), 2621 to 2717 (QVVE…ETLE), 2718 to 2831 (PLHL…QLEF), 2832 to 2933 (KLEE…FIQN), 2934 to 3036 (TCNE…EKIK), 3037 to 3142 (QLDT…NMVL), 3143 to 3248 (ELSP…DLRT), 3249 to 3352 (NVLN…AQET), 3353 to 3465 (EAER…MWCE), 3466 to 3573 (ELKQ…KVQK), 3574 to 3679 (NKEL…SNEV), 3680 to 3777 (LKSS…ECRT), 3778 to 3880 (SQLN…KIME), 3881 to 3986 (SLPQ…VTQE), and 3987 to 4086 (QNEL…LPAV). A Phosphoserine modification is found at Ser-2781. 2 stretches are compositionally biased toward basic and acidic residues: residues 4073-4083 (QEQEGVERDRL) and 4093-4102 (VAERDASERK). 4 disordered regions span residues 4073–4162 (QEQE…SGTI), 4184–4232 (DSLN…KTRP), 4335–4363 (EKHS…PVNL), and 4416–4448 (HDND…QGQN). Position 4108 is a phosphoserine (Ser-4108). Composition is skewed to basic and acidic residues over residues 4122–4134 (SSVK…EKAE) and 4144–4155 (WKHDKDMEEDRA). One copy of the Spectrin 36 repeat lies at 4229 to 4348 (KTRPEPTEVL…EDQHPTILKK (120 aa)). Positions 4335 to 4356 (EKHSEDQHPTILKKSSEPEHQE) are enriched in basic and acidic residues. Positions 4421–4434 (TQESSASNQASSPE) are enriched in polar residues. Spectrin repeat units lie at residues 4520–4639 (NMTE…RSYQ), 4640–4727 (NEIK…RARY), 4728–4837 (TELS…QSLL), 4838–4943 (QKWE…QALL), 4944–5051 (KHLL…QEKL), 5052–5164 (HQLQ…KIQH), 5165–5266 (LEQL…TQVN), 5267–5391 (QLKT…KAYS), 5392–5487 (NAHG…MLLV), 5488–5589 (KANE…CSEL), 5590–5704 (QGIG…QWQD), 5705–5799 (FTTS…PQLA), 5800–5907 (EMIK…RVAI), 5908–6017 (RKQE…VKKL), 6018–6135 (KETF…EETW), 6136–6243 (RLWQ…LRHF), and 6244–6355 (TNQR…PGLE). Residue Ser-5785 is modified to Phosphoserine. Over residues 6354–6367 (LEDEKEASENETDM) the composition is skewed to acidic residues. Residues 6354–6508 (LEDEKEASEN…GTDGGKEGPR (155 aa)) form a disordered region. 7 positions are modified to phosphoserine: Ser-6361, Ser-6384, Ser-6411, Ser-6428, Ser-6429, Ser-6430, and Ser-6459. Positions 6368 to 6384 (EDPREIQTDSWRKRGES) are enriched in basic and acidic residues. 3 Spectrin repeats span residues 6461–6549 (SCPE…KLKI), 6550–6665 (KQNL…QCQD), and 6666–6782 (FHQL…SFDE). Residues 6463-6474 (PEHHYKQMEGDR) are compositionally biased toward basic and acidic residues. Positions 6477–6489 (PPVPPASSTPYKP) are enriched in pro residues. The segment covering 6490–6499 (PYGKLLLPPG) has biased composition (low complexity). Residues 6769-6824 (GTQNPASPLPSFDEVDSGDQPPATSVPAPRAKQFRAVRTTEGEEETESRVPGSTRP) form a disordered region. One can recognise a KASH domain in the interval 6826-6885 (RSFLSRVVRAALPLQLLLLLLLLLACLLPSSEEDYSCTQANNFARSFYPMLRYTNGPPPT). A helical; Anchor for type IV membrane protein transmembrane segment spans residues 6835 to 6855 (AALPLQLLLLLLLLLACLLPS). The Perinuclear space segment spans residues 6856–6885 (SEEDYSCTQANNFARSFYPMLRYTNGPPPT). Positions 6872 to 6885 (FYPMLRYTNGPPPT) are sufficient for interaction with SUN2.

It belongs to the nesprin family. Core component of LINC complexes which are composed of inner nuclear membrane SUN domain-containing proteins coupled to outer nuclear membrane KASH domain-containing nesprins. SUN and KASH domain-containing proteins seem to bind each other promiscuously; however, some LINC complex constituents are tissue- or cell type-specific. At least SUN1/2-containing core LINC complexes are proposed to be hexameric composed of three protomers of each KASH and SUN domain-containing protein. The SUN2:SYNE2/KASH2 complex is a heterohexamer; the homotrimeric cloverleave-like conformation of the SUN domain is a prerequisite for LINC complex formation in which three separate SYNE2/KASH2 peptides bind at the interface of adjacent SUN domains. Interacts with EMD, LMNA, MKS3 and F-actin via its N-terminal domain. Interacts with DCTN1 and DYNC1I1/2; suggesting the association with the dynein-dynactin motor complex. Associates with kinesin motor complexes. Interacts with TMEM67. Interacts (via KASH domain) with TMEM258. Interacts with BROX; this interaction promotes SYN2 ubiquitination and facilitates the relaxation of mechanical stress imposed by compressive actin fibers at the rupture site. The disulfid bond with SUN2 is required for stability of the SUN2:SYNE2/KASH2 LINC complex under tensile forces though not required for the interaction. In terms of processing, ubiquitinated, targeting it for degradation. As to expression, widely expressed, with higher level in kidney, adult and fetal liver, stomach and placenta. Weakly expressed in skeletal muscle and brain. Isoform 5 is highly expressed in pancreas, skeletal muscle and heart.

It is found in the nucleus outer membrane. Its subcellular location is the sarcoplasmic reticulum membrane. The protein resides in the cell membrane. The protein localises to the cytoplasm. It localises to the cytoskeleton. It is found in the mitochondrion. Its subcellular location is the nucleus. The protein resides in the nucleoplasm. The protein localises to the myofibril. It localises to the sarcomere. It is found in the z line. Its subcellular location is the cell junction. The protein resides in the focal adhesion. Functionally, multi-isomeric modular protein which forms a linking network between organelles and the actin cytoskeleton to maintain the subcellular spatial organization. As a component of the LINC (LInker of Nucleoskeleton and Cytoskeleton) complex involved in the connection between the nuclear lamina and the cytoskeleton. The nucleocytoplasmic interactions established by the LINC complex play an important role in the transmission of mechanical forces across the nuclear envelope and in nuclear movement and positioning. Specifically, SYNE2 and SUN2 assemble in arrays of transmembrane actin-associated nuclear (TAN) lines which are bound to F-actin cables and couple the nucleus to retrograde actin flow during actin-dependent nuclear movement. May be involved in nucleus-centrosome attachment. During interkinetic nuclear migration (INM) at G2 phase and nuclear migration in neural progenitors its LINC complex association with SUN1/2 and probable association with cytoplasmic dynein-dynactin motor complexes functions to pull the nucleus toward the centrosome; SYNE1 and SYNE2 may act redundantly. During INM at G1 phase mediates respective LINC complex association with kinesin to push the nucleus away from the centrosome. Involved in nuclear migration in retinal photoreceptor progenitors. Required for centrosome migration to the apical cell surface during early ciliogenesis. Facilitates the relaxation of mechanical stress imposed by compressive actin fibers at the rupture site through its nteraction with SYN2. The chain is Nesprin-2 from Homo sapiens (Human).